Consider the following 412-residue polypeptide: Transcription factor NIGT1 (412 aa).

Disordered stretches follow at residues 54 to 241, 286 to 310, and 358 to 412; these read MDAA…RCWA, KYRL…PAPP, and AMLP…TTSA. Over residues 90 to 112 the composition is skewed to basic and acidic residues; it reads ESTHADAAKSGKKEEAETSERHS. Over residues 183 to 193 the composition is skewed to low complexity; it reads ASSTTAAASST. Over residues 198–228 the composition is skewed to basic and acidic residues; that stretch reads SGDKPTDDDTEKHMETDKDNDKDAKDKDKEG. Positions 232 to 292 constitute an HTH myb-type domain; that stretch reads PHRKPRRCWA…HLQKYRLHTR (61 aa). Positions 263–288 form a DNA-binding region, H-T-H motif; sequence PKQIRELMKVDGLTNDEVKSHLQKYR. The span at 383–392 shows a compositional bias: basic and acidic residues; it reads SGSEGRRSGD. Low complexity predominate over residues 395 to 412; that stretch reads DGSSSSPAVSSSSQTTSA.

The protein resides in the nucleus. Functionally, transcriptional repressor that may play a role in response to nitrogen. May be involved in a time-dependent signaling for transcriptional regulation of nitrate-responsive genes. Binds specifically to the DNA sequence motif 5'-GAATC-3' or 5'-GAATATTC-3'. Represses the activity of its own promoter trough binding to these motifs. In Oryza sativa subsp. japonica (Rice), this protein is Transcription factor NIGT1.